Reading from the N-terminus, the 77-residue chain is MKEQKLIHEGLITESLPNGMFRVRLDNEDLILGYISGRIRRSFIRILPGDRVKIEMSRYDSTRGRIIYRLRKKDSND.

The S1-like domain maps to 1–71 (MKEQKLIHEG…TRGRIIYRLR (71 aa)).

This sequence belongs to the IF-1 family. Component of the 30S ribosomal translation pre-initiation complex which assembles on the 30S ribosome in the order IF-2 and IF-3, IF-1 and N-formylmethionyl-tRNA(fMet); mRNA recruitment can occur at any time during PIC assembly.

The protein resides in the plastid. The protein localises to the chloroplast. One of the essential components for the initiation of protein synthesis. Stabilizes the binding of IF-2 and IF-3 on the 30S subunit to which N-formylmethionyl-tRNA(fMet) subsequently binds. Helps modulate mRNA selection, yielding the 30S pre-initiation complex (PIC). Upon addition of the 50S ribosomal subunit IF-1, IF-2 and IF-3 are released leaving the mature 70S translation initiation complex. The sequence is that of Translation initiation factor IF-1, chloroplastic from Phalaenopsis aphrodite subsp. formosana (Moth orchid).